We begin with the raw amino-acid sequence, 45 residues long: Large ribosomal subunit protein bL34 (45 aa).

The disordered stretch occupies residues Met-1 to Val-45. Residues Ser-10–Val-45 are compositionally biased toward basic residues.

The protein belongs to the bacterial ribosomal protein bL34 family.

The chain is Large ribosomal subunit protein bL34 from Prochlorococcus marinus (strain MIT 9515).